The chain runs to 342 residues: Serpentine receptor class r-10 (342 aa).

The Extracellular portion of the chain corresponds to M1–D11. A helical transmembrane segment spans residues T12 to L32. Residues K33–N38 are Cytoplasmic-facing. The helical transmembrane segment at L39–I59 threads the bilayer. The Extracellular segment spans residues E60 to N92. N71 and N83 each carry an N-linked (GlcNAc...) asparagine glycan. A helical membrane pass occupies residues S93–Y113. Residues R114–Y131 lie on the Cytoplasmic side of the membrane. Residues L132 to F152 traverse the membrane as a helical segment. The Extracellular segment spans residues L153 to N202. N179 is a glycosylation site (N-linked (GlcNAc...) asparagine). A helical membrane pass occupies residues L203–C223. Residues G224–L257 lie on the Cytoplasmic side of the membrane. The helical transmembrane segment at I258–I278 threads the bilayer. At N279–N285 the chain is on the extracellular side. Residues F286 to I306 form a helical membrane-spanning segment. Residues R307–H342 lie on the Cytoplasmic side of the membrane.

This sequence belongs to the nematode receptor-like protein str family. Interacts with odr-4.

The protein localises to the cell projection. It localises to the cilium membrane. Its function is as follows. An odorant receptor which affects chemotaxis to the volatile odorant diacetyl. Specifies AWA neuronal cell fate via the odr-7 pathway. This chain is Serpentine receptor class r-10, found in Caenorhabditis briggsae.